A 104-amino-acid chain; its full sequence is Flagellar hook-basal body complex protein FliE (104 aa).

It belongs to the FliE family.

The protein localises to the bacterial flagellum basal body. The sequence is that of Flagellar hook-basal body complex protein FliE from Salmonella heidelberg (strain SL476).